The primary structure comprises 206 residues: MNNIYQKDLGLQQYTKVFEDMLEFTSTRTPETNDEIWLVEHPAVFTQGKHGKPEHILNSHNIPIVATDRGGQVTYHGPGQAVIYFLLDIKRNKLGAKKLVTTVEQACINMLDKYYNLKAHIIDGAHGIYINNQKIASLGLRIKQGKSYHGIAINTNMDLTPFSYINPCGYSGLKMCQLANFYQEADIKKVQQQYTAEFVTLLNNSI.

The 177-residue stretch at 30–206 (PETNDEIWLV…EFVTLLNNSI (177 aa)) folds into the BPL/LPL catalytic domain. Substrate contacts are provided by residues 69–76 (RGGQVTYH), 137–139 (SLG), and 150–152 (GIA). The Acyl-thioester intermediate role is filled by Cys168.

The protein belongs to the LipB family.

The protein resides in the cytoplasm. It catalyses the reaction octanoyl-[ACP] + L-lysyl-[protein] = N(6)-octanoyl-L-lysyl-[protein] + holo-[ACP] + H(+). Its pathway is protein modification; protein lipoylation via endogenous pathway; protein N(6)-(lipoyl)lysine from octanoyl-[acyl-carrier-protein]: step 1/2. Catalyzes the transfer of endogenously produced octanoic acid from octanoyl-acyl-carrier-protein onto the lipoyl domains of lipoate-dependent enzymes. Lipoyl-ACP can also act as a substrate although octanoyl-ACP is likely to be the physiological substrate. The polypeptide is Octanoyltransferase (Francisella tularensis subsp. holarctica (strain FTNF002-00 / FTA)).